A 210-amino-acid chain; its full sequence is Na(+)-translocating NADH-quinone reductase subunit D (210 aa).

A run of 6 helical transmembrane segments spans residues 14-34 (PIVN…ALAV), 42-62 (LVMA…ISLI), 72-92 (IIVQ…LLQA), 103-123 (VFVG…AYAM), 131-151 (FMDG…VGFV), and 178-198 (NGML…IWII).

Belongs to the NqrDE/RnfAE family. In terms of assembly, composed of six subunits; NqrA, NqrB, NqrC, NqrD, NqrE and NqrF.

The protein resides in the cell inner membrane. The catalysed reaction is a ubiquinone + n Na(+)(in) + NADH + H(+) = a ubiquinol + n Na(+)(out) + NAD(+). NQR complex catalyzes the reduction of ubiquinone-1 to ubiquinol by two successive reactions, coupled with the transport of Na(+) ions from the cytoplasm to the periplasm. NqrA to NqrE are probably involved in the second step, the conversion of ubisemiquinone to ubiquinol. This is Na(+)-translocating NADH-quinone reductase subunit D from Shewanella putrefaciens (strain CN-32 / ATCC BAA-453).